Reading from the N-terminus, the 85-residue chain is Depressant scorpion toxin BmKIM (85 aa).

The signal sequence occupies residues Met1 to Ala21. An LCN-type CS-alpha/beta domain is found at Asp22–Gly82. 4 disulfides stabilise this stretch: Cys31–Cys81, Cys35–Cys56, Cys42–Cys63, and Cys46–Cys65. Gly82 carries the post-translational modification Glycine amide.

The protein belongs to the long (4 C-C) scorpion toxin superfamily. Sodium channel inhibitor family. As to expression, expressed by the venom gland.

It is found in the secreted. Causes a slow progressive depressant flaccid paralysis, when injected into S.falculata blowfly larvae. Inhibits dose-dependently the total sodium (Nav) currents both in dorsal root ganglia neurons and in ventricular myocytes. Is toxic to mice by intravenous injection, but not by subcutaneous or intracerebroventricular injection. Produces antiarrhythmia in rat. Is then active on both mammals and insects. The polypeptide is Depressant scorpion toxin BmKIM (KIM2) (Olivierus martensii (Manchurian scorpion)).